A 123-amino-acid chain; its full sequence is Holo-[acyl-carrier-protein] synthase (123 aa).

Mg(2+) contacts are provided by aspartate 7 and glutamate 56.

This sequence belongs to the P-Pant transferase superfamily. AcpS family. Requires Mg(2+) as cofactor.

Its subcellular location is the cytoplasm. The catalysed reaction is apo-[ACP] + CoA = holo-[ACP] + adenosine 3',5'-bisphosphate + H(+). In terms of biological role, transfers the 4'-phosphopantetheine moiety from coenzyme A to a Ser of acyl-carrier-protein. In Carboxydothermus hydrogenoformans (strain ATCC BAA-161 / DSM 6008 / Z-2901), this protein is Holo-[acyl-carrier-protein] synthase.